Here is a 999-residue protein sequence, read N- to C-terminus: MMGLFPRTTGALAIFVVVILVHGELRIETKGQYDEEEMTMQQAKRRQKREWVKFAKPCREGEDNSKRNPIAKITSDYQATQKITYRISGVGIDQPPFGIFVVDKNTGDINITAIVDREETPSFLITCRALNAQGLDVEKPLILTVKILDINDNPPVFSQQIFMGEIEENSASNSLVMILNATDADEPNHLNSKIAFKIVSQEPAGTPMFLLSRNTGEVRTLTNSLDREQASSYRLVVSGADKDGEGLSTQCECNIKVKDVNDNFPMFRDSQYSARIEENILSSELLRFQVTDLDEEYTDNWLAVYFFTSGNEGNWFEIQTDPRTNEGILKVVKALDYEQLQSVKLSIAVKNKAEFHQSVISRYRVQSTPVTIQVINVREGIAFRPASKTFTVQKGISSKKLVDYILGTYQAIDEDTNKAASNVKYVMGRNDGGYLMIDSKTAEIKFVKNMNRDSTFIVNKTITAEVLAIDEYTGKTSTGTVYVRVPDFNDNCPTAVLEKDAVCSSSPSVVVSARTLNNRYTGPYTFALEDQPVKLPAVWSITTLNATSALLRAQEQIPPGVYHISLVLTDSQNNRCEMPRSLTLEVCQCDNRGICGTSYPTTSPGTRYGRPHSGRLGPAAIGLLLLGLLLLLLAPLLLLTCDCGAGSTGGVTGGFIPVPDGSEGTIHQWGIEGAHPEDKEITNICVPPVTANGADFMESSEVCTNTYARGTAVEGTSGMEMTTKLGAATESGGAAGFATGTVSGAASGFGAATGVGICSSGQSGTMRTRHSTGGTNKDYADGAISMNFLDSYFSQKAFACAEEDDGQEANDCLLIYDNEGADATGSPVGSVGCCSFIADDLDDSFLDSLGPKFKKLAEISLGVDGEGKEVQPPSKDSGYGIESCGHPIEVQQTGFVKCQTLSGSQGASALSTSGSVQPAVSIPDPLQHGNYLVTETYSASGSLVQPSTAGFDPLLTQNVIVTERVICPISSVPGNLAGPTQLRGSHTMLCTEDPCSRLI.

The first 23 residues, 1 to 23 (MMGLFPRTTGALAIFVVVILVHG), serve as a signal peptide directing secretion. Residues 24-49 (ELRIETKGQYDEEEMTMQQAKRRQKR) constitute a propeptide that is removed on maturation. Cadherin domains are found at residues 50-158 (EWVK…PVFS), 159-268 (QQIF…PMFR), 269-383 (DSQY…GIAF), and 386-499 (ASKT…VLEK). Residues 50 to 615 (EWVKFAKPCR…TRYGRPHSGR (566 aa)) lie on the Extracellular side of the membrane. N-linked (GlcNAc...) asparagine glycans are attached at residues Asn110 and Asn180. 2 N-linked (GlcNAc...) asparagine glycosylation sites follow: Asn459 and Asn545. Residues 616-640 (LGPAAIGLLLLGLLLLLLAPLLLLT) traverse the membrane as a helical segment. Residues 641–999 (CDCGAGSTGG…CTEDPCSRLI (359 aa)) are Cytoplasmic-facing. A required for interaction with CTNND1 and localization at cell-cell junctions region spans residues 642–714 (DCGAGSTGGV…NTYARGTAVE (73 aa)). Desmoglein repeat repeat units follow at residues 910–935 (LSTSGSVQPAVSIPDPLQHGNYLVTE) and 936–966 (TYSASGSLVQPSTAGFDPLLTQNVIVTERVI).

Homodimer. Part of a complex that contains DSG3, PKP1, YAP1 and YWHAG; the complex is required for localization of DSG3 and YAP1 to the cell membrane in keratinocytes. Interacts with PKP2. Interacts with CTNND1; the interaction facilitates DSG3 localization and retention at cell-cell junctions. Interacts with CDH1; the interaction is required for CDH1 localization to developing adherens junctions. Interacts with RAC1; the interaction is required for DSG3 translocation to cell-cell junctions, organization of cortical F-actin bundles and actin anchoring at cell-cell junctions. Interacts with DSC3; the interaction may limit the interaction of DSC3 with p38MAPK family members and therefore repress p38MAPK signaling activation. Expressed throughout the basal and spinous layer of the epidermis with weak expression in the granular layer (at protein level). Expressed in skin and mucosa (at protein level). Expressed in the basal layer of the outer root sheath of the telogen hair club, specifically at the cell membrane between the apex of the cells and the surrounding hair club (at protein level). Expression is less abundant between the lateral margins of the outer root sheath basal cells (at protein level). Also expressed in the tongue, tonsil and esophagus.

Its subcellular location is the cell membrane. The protein localises to the cell junction. The protein resides in the desmosome. It localises to the cytoplasm. It is found in the tight junction. Its function is as follows. A component of desmosome cell-cell junctions which are required for positive regulation of cellular adhesion. Required for adherens and desmosome junction assembly in response to mechanical force in keratinocytes. Required for desmosome-mediated cell-cell adhesion of cells surrounding the telogen hair club and the basal layer of the outer root sheath epithelium, consequently is essential for the anchoring of telogen hairs in the hair follicle. Required for the maintenance of the epithelial barrier via promoting desmosome-mediated intercellular attachment of suprabasal epithelium to basal cells. May play a role in the protein stability of the desmosome plaque components DSP, JUP, PKP1, PKP2 and PKP3. Required for YAP1 localization at the plasma membrane in keratinocytes in response to mechanical strain, via the formation of an interaction complex composed of DSG3, PKP1 and YWHAG. May also be involved in the positive regulation of YAP1 target gene transcription and as a result cell proliferation. Positively regulates cellular contractility and cell junction formation via organization of cortical F-actin bundles and anchoring of actin to tight junctions, in conjunction with RAC1. The cytoplasmic pool of DSG3 is required for the localization of CDH1 and CTNNB1 at developing adherens junctions, potentially via modulation of SRC activity. Inhibits keratinocyte migration via suppression of p38MAPK signaling, may therefore play a role in moderating wound healing. In Homo sapiens (Human), this protein is Desmoglein-3.